We begin with the raw amino-acid sequence, 160 residues long: Telomere length regulation protein TEN1 (160 aa).

Interacts with CDC13 and STN1.

It is found in the nucleus. Its subcellular location is the chromosome. The protein localises to the telomere. Has a role in telomere length regulation and telomere end protection. Acts as an inhibitor of telomerase loading through its interaction with CDC13. The chain is Telomere length regulation protein TEN1 (TEN1) from Saccharomyces cerevisiae (strain ATCC 204508 / S288c) (Baker's yeast).